We begin with the raw amino-acid sequence, 359 residues long: RNA-binding protein 4B (359 aa).

2 consecutive RRM domains span residues 2 to 72 and 78 to 148; these read VKLF…ASKN and TKLH…LSTS. Residues 160 to 177 form a CCHC-type zinc finger; sequence SGCYRCGKEGHWSKECPV. An interaction with TNPO3 region spans residues 196–359; it reads AVRTPYTMGY…YVDRARYSAF (164 aa).

In terms of assembly, interacts with TNPO3, which may mediate nuclear import of the protein. Expressed in liver and kidney (at protein level). Ubiquitously expressed.

The protein resides in the nucleus. The protein localises to the nucleolus. In terms of biological role, required for the translational activation of PER1 mRNA in response to circadian clock. Binds directly to the 3'-UTR of the PER1 mRNA. The protein is RNA-binding protein 4B (RBM4B) of Homo sapiens (Human).